An 880-amino-acid chain; its full sequence is 3-isopropylmalate dehydratase large subunit gloJ (880 aa).

Residues C457, C520, and C523 each coordinate [4Fe-4S] cluster.

This sequence belongs to the aconitase/IPM isomerase family. LeuC type 2 subfamily. Requires [4Fe-4S] cluster as cofactor.

It catalyses the reaction (2R,3S)-3-isopropylmalate = (2S)-2-isopropylmalate. Its pathway is mycotoxin biosynthesis. Its function is as follows. 3-isopropylmalate dehydratase large subunit; part of the gene cluster that mediates the biosynthesis of pneumocandins, lipohexapeptides of the echinocandin family that prevent fungal cell wall formation by non-competitive inhibition of beta-1,3-glucan synthase. The 10,12-dimethylmyristoyl side chain is synthesized by the reducing polyketide synthase gloL/GLPKS4. The thioesterase gloN/GLHYD exclusively interacts with gloL/GLPKS4 to maintain turnover of the polyketide side chain. The 10R,12S-dimethylmyristic acid is then transferred to the first thiolation domain of the nonribosomal peptide synthetase gloA/GLNRPS4 by the acyl-AMP ligase gloD/GLligase, followed by its acylation to L-ornithine to trigger elongation of the cyclic hexapeptide. L-ornithine, 4R-hydroxyl-L-proline (generated from L-proline by the dioxygenase gloF/GLOXY2), 3S-hydroxyl-L-homotyrosine (generated by gloG/GLHtyB, gloH/GLHtyA, gloI/GLHtyC, gloJ/GLHtyD and hydroxylated at C-3 by the dioxygenase gloM/GLOXY1), 3R-hydroxyl-L-glutamine (generated from L-glutamine probably by the dioxygenase gloE/GLOXY3) and 3S-hydroxyl-L-proline (generated from L-proline by the dioxygenase gloF/GLOXY2 to yield pneumocandin B0), or 3S-hydroxyl-4S-methyl-L-proline (generated from L-leucine by the dioxygenase gloC/GLOXY4 to yield pneumocandin A0) are sequentially added to the growing chain. The last C domain of gloA/GLNRPS4 is proposed to be responsible for cyclization by condensation to form the peptide bond between L-ornithine and 3S-hydroxyl-4S-methyl-L-proline (for pneumocandin A0) or 3S-hydroxyl-L-proline (for pneumocandin B0). Finally, the subsequent C-4 hydroxylation of 3S-hydroxyl-L-homotyrosine and L-ornithine dihydroxylation at C-4 and C-5 are performed by the cytochrome P450 monooxygenases gloP/GLP450-1 and gloO/GLP450-2, respectively. This Glarea lozoyensis (strain ATCC 20868 / MF5171) protein is 3-isopropylmalate dehydratase large subunit gloJ.